The primary structure comprises 600 residues: MKKLKVTLLASSVVLAAALLSACGSNQNSSTSTKKLKAGNFDVAYQNPDKAIKGGNLKIAYQSDSPMKAEWLAPLSDDATFGSMSSPGGGQDGLFFTNSSFKYINGGPANVSLYKDAKTATITLRKDLKWSDGSEVTAKDYEFSYDLTANPAYGSDRWTDSLANIVGLSDYHAGKAKTISGITFPDGENGKVIKVQFKEMTPGMNQTGNGYFLETVAPYQYLKDVAPKDLASSPKSTTKPLVTGPFKPENVVAGESIKYVPNPYYWGEKPKLNSITYEIVSTAKSVAALSAHKYDYINDMRASQYKQVKDVKGYKVLGQQELYISLMYYNLGHYDVKKSISVQDRKTPLQDQNVREALGYARNVAAVQAKFSNGLATPANGLIPPIFKEFTSPSVKGYEKQDLDKANKLLDEDGWKLNKSTGYREKDGKELSLVYAARVGDANSETIAQNYIQQWKKIGVKVSLYHGKLMEFNSWVDHMTTPPGSDDWDITDGAWSLSGEPSQQDLFSAAAPYNFGHFNDPEITKDLNDIDSTKAEDSTYRKAAFIKYQEDMNKKAYVVPTAYAINYTPVNKRVVGMTLDYGAMNTWSEIGVSSDKMATK.

A signal peptide spans 1–22 (MKKLKVTLLASSVVLAAALLSA). Cys-23 carries the N-palmitoyl cysteine lipid modification. Cys-23 carries S-diacylglycerol cysteine lipidation.

This sequence belongs to the bacterial solute-binding protein 5 family. In terms of assembly, the complex is composed of two ATP-binding proteins (OppD and OppF), two transmembrane proteins (OppB and OppC) and a solute-binding protein (OppA).

Its subcellular location is the cell membrane. Functionally, part of the ABC transporter complex OppABCDF involved in the uptake of oligopeptides. The chain is Oligopeptide-binding protein OppA (oppA) from Lactococcus lactis subsp. lactis (strain IL1403) (Streptococcus lactis).